The primary structure comprises 262 residues: Tetratricopeptide repeat protein 33 (262 aa).

3 TPR repeats span residues 59–92, 93–126, and 127–160; these read SKQL…TPND, ATLY…NPHS, and WESW…YPMN. Residue serine 197 is modified to Phosphoserine. Threonine 251 is subject to Phosphothreonine.

This is Tetratricopeptide repeat protein 33 (TTC33) from Homo sapiens (Human).